Reading from the N-terminus, the 493-residue chain is MEYKGKVVAGLLTATCVFSIIALILSAVDVKDVFLPPGTKYGLVFDAGSTHTALYVYQWPADKENGTGIVSQVESCTVNGSGISSYADDPAGAGASLKPCLDKAMAVIPVEQQWQTPTYLGATAGMRLLREQNSTKAEQVFAEVSKAIREFPVDFRGAQILTGNEEGSFGWITVNYLLETLIKFSFAGKWEHPQNTEVLGALDLGGASTQITFQPGVTIEDKNTSVLFRLYGTNYSLYTHSYLCYGQIQASKRLMAALHQDGSYVQNISHPCYPKGYRRIITIAEIYDSPCVPTPSMLSPAQILTVTGTGNPAACPTAILKLFNLTCGANRTCGFDGVYQPPVRGQFFAFAGFYYTFSFLNLTGQQSLSHVNATVWDFCNKNWSELVETFPQNKEHLHTYCVVGLYILTLLVDGYKFDEHTWSNIHFSQKAGNADIGWTLGFMLNLTNMIPTEALEHVKGHEPSLWAGAISFIVLAIVAGLVAILLQCFWKSK.

The Cytoplasmic portion of the chain corresponds to 1–7 (MEYKGKV). Residues 8–28 (VAGLLTATCVFSIIALILSAV) form a helical membrane-spanning segment. Over 29–463 (DVKDVFLPPG…ALEHVKGHEP (435 aa)) the chain is Extracellular. N-linked (GlcNAc...) asparagine glycans are attached at residues Asn-65, Asn-79, and Asn-133. The cysteines at positions 76 and 100 are disulfide-linked. The Proton acceptor role is filled by Glu-166. Residues Asn-223, Asn-234, Asn-267, Asn-324, Asn-330, Asn-361, Asn-372, Asn-382, and Asn-445 are each glycosylated (N-linked (GlcNAc...) asparagine). Residues Cys-244 and Cys-291 are joined by a disulfide bond. A disulfide bridge connects residues Cys-327 and Cys-333. Cys-379 and Cys-401 are oxidised to a cystine. Residues 464–486 (SLWAGAISFIVLAIVAGLVAILL) traverse the membrane as a helical segment. At 487-493 (QCFWKSK) the chain is on the cytoplasmic side.

It belongs to the GDA1/CD39 NTPase family. Ca(2+) serves as cofactor. Requires Mg(2+) as cofactor. Post-translationally, N-glycosylated.

The protein resides in the cell membrane. It catalyses the reaction a ribonucleoside 5'-triphosphate + 2 H2O = a ribonucleoside 5'-phosphate + 2 phosphate + 2 H(+). Its function is as follows. Canalicular ectonucleoside NTPDase responsible for the main hepatic NTPDase activity. Ectonucleoside ATPases catalyze the hydrolysis of gamma- and beta-phosphate residues of nucleotides, playing a central role in concentration of extracellular nucleotides. This is Ectonucleoside triphosphate diphosphohydrolase 8 (ENTPD8) from Gallus gallus (Chicken).